A 316-amino-acid chain; its full sequence is MST50-interacting protein 11 (316 aa).

7 WD repeats span residues 13 to 53 (GHNG…TSYG), 61 to 100 (GHSHIVSDCVISSDGAYALSASWDKTLRLWELATGTTTRR), 103 to 142 (GHTNDVLSVSFSADNRQIVSGSRDRSIKLWNTLGDCKYTI), 146 to 187 (GHSE…LQTD), 190 to 229 (GHTGYINTVTISPDGSLCASGGKDGTTMLWDLNESKHLYS), 231 to 269 (NANDEIHALVFSPNRYWLCAATASSIIIFDLEKKSKVDE), and 281 to 316 (SREPECISLAWSADGQTLFAGYTDNIIRAWGVMSRA).

Belongs to the WD repeat G protein beta family. Ribosomal protein RACK1 subfamily. As to quaternary structure, interacts with MST50 and MCK1.

Involved in regulating the cell wall integrity and MPS1 activation via its interaction with the MAPKKK MCK1. This Pyricularia oryzae (strain 70-15 / ATCC MYA-4617 / FGSC 8958) (Rice blast fungus) protein is MST50-interacting protein 11.